A 312-amino-acid chain; its full sequence is DNA-directed RNA polymerase subunit alpha (312 aa).

An alpha N-terminal domain (alpha-NTD) region spans residues 1–226 (MIEFEKPRIE…EHLDIFVNLT (226 aa)). The tract at residues 243–312 (KEKMLEMTIE…DLGLGLRKDD (70 aa)) is alpha C-terminal domain (alpha-CTD).

This sequence belongs to the RNA polymerase alpha chain family. In terms of assembly, homodimer. The RNAP catalytic core consists of 2 alpha, 1 beta, 1 beta' and 1 omega subunit. When a sigma factor is associated with the core the holoenzyme is formed, which can initiate transcription.

It catalyses the reaction RNA(n) + a ribonucleoside 5'-triphosphate = RNA(n+1) + diphosphate. In terms of biological role, DNA-dependent RNA polymerase catalyzes the transcription of DNA into RNA using the four ribonucleoside triphosphates as substrates. This Enterococcus faecalis (strain ATCC 700802 / V583) protein is DNA-directed RNA polymerase subunit alpha.